Consider the following 20-residue polypeptide: Unknown protein NF045 from 2D-PAGE (20 aa).

This Naegleria fowleri (Brain eating amoeba) protein is Unknown protein NF045 from 2D-PAGE.